The chain runs to 243 residues: Venom protease (243 aa).

One can recognise a Peptidase S1 domain in the interval 1–243 (VVGGKPAKLG…DSFILPALKK (243 aa)). The cysteines at positions 34 and 50 are disulfide-linked. Catalysis depends on charge relay system residues H49 and D97. 2 disulfide bridges follow: C165-C178 and C189-C217. S193 functions as the Charge relay system in the catalytic mechanism.

This sequence belongs to the peptidase S1 family. Expressed by the venom duct.

The protein localises to the secreted. In Bombus pensylvanicus (American bumblebee), this protein is Venom protease.